The primary structure comprises 222 residues: MKTNPIKLEKKLKLKFSDQKIFIKSLTHKSFDSINNNEKIEFLGDRVLGLIIAKKLLELYPDEKEGVLDKKFASLVNKKKCLEIAKKIELEKYILVLNPKNKKIEIEDKIVADCLEALIGAIYLDKGLNFTERFILNLWSEHITASVITQIDAKTKLQEYSLKIFKVLPIYKLISNTGPRHKPLFKVAVKLKNTKFFTAEGTSKKDAEQNAASLCLQDIFKK.

The RNase III domain occupies 5–127; that stretch reads PIKLEKKLKL…LIGAIYLDKG (123 aa). Position 41 (glutamate 41) interacts with Mg(2+). Residue aspartate 45 is part of the active site. Positions 113 and 116 each coordinate Mg(2+). Glutamate 116 is an active-site residue. The 70-residue stretch at 152-221 folds into the DRBM domain; sequence DAKTKLQEYS…ASLCLQDIFK (70 aa).

The protein belongs to the ribonuclease III family. In terms of assembly, homodimer. The cofactor is Mg(2+).

It is found in the cytoplasm. The catalysed reaction is Endonucleolytic cleavage to 5'-phosphomonoester.. Functionally, digests double-stranded RNA. Involved in the processing of primary rRNA transcript to yield the immediate precursors to the large and small rRNAs (23S and 16S). Processes some mRNAs, and tRNAs when they are encoded in the rRNA operon. Processes pre-crRNA and tracrRNA of type II CRISPR loci if present in the organism. The protein is Ribonuclease 3 of Pelagibacter ubique (strain HTCC1062).